A 100-amino-acid chain; its full sequence is NADH-quinone oxidoreductase subunit K 1 (100 aa).

Transmembrane regions (helical) follow at residues 4-24 (LNNY…GVLV), 29-49 (IVIF…FIAF), and 60-80 (IFVF…LALM).

This sequence belongs to the complex I subunit 4L family. NDH-1 is composed of 14 different subunits. Subunits NuoA, H, J, K, L, M, N constitute the membrane sector of the complex.

The protein resides in the cell inner membrane. The catalysed reaction is a quinone + NADH + 5 H(+)(in) = a quinol + NAD(+) + 4 H(+)(out). NDH-1 shuttles electrons from NADH, via FMN and iron-sulfur (Fe-S) centers, to quinones in the respiratory chain. The immediate electron acceptor for the enzyme in this species is believed to be ubiquinone. Couples the redox reaction to proton translocation (for every two electrons transferred, four hydrogen ions are translocated across the cytoplasmic membrane), and thus conserves the redox energy in a proton gradient. The sequence is that of NADH-quinone oxidoreductase subunit K 1 from Geotalea daltonii (strain DSM 22248 / JCM 15807 / FRC-32) (Geobacter daltonii).